The primary structure comprises 621 residues: Phosphoenolpyruvate carboxykinase [GTP] (621 aa).

Substrate-binding positions include Arg-82 and 220-222; that span reads YGG. Lys-229 and His-249 together coordinate Mn(2+). Ser-271 contributes to the substrate binding site. 272 to 277 is a GTP binding site; the sequence is QCGKTN. The active site involves Cys-273. Asp-296 provides a ligand contact to Mn(2+). 386-388 provides a ligand contact to substrate; sequence NSR. GTP contacts are provided by residues Arg-388, Arg-419, and 514 to 517; that span reads FGEN.

It belongs to the phosphoenolpyruvate carboxykinase [GTP] family. As to quaternary structure, monomer. Mn(2+) is required as a cofactor.

The protein resides in the cytoplasm. It carries out the reaction oxaloacetate + GTP = phosphoenolpyruvate + GDP + CO2. It functions in the pathway carbohydrate biosynthesis; gluconeogenesis. Its function is as follows. Catalyzes the conversion of oxaloacetate (OAA) to phosphoenolpyruvate (PEP), the rate-limiting step in the metabolic pathway that produces glucose from lactate and other precursors derived from the citric acid cycle. The polypeptide is Phosphoenolpyruvate carboxykinase [GTP] (Corynebacterium kroppenstedtii (strain DSM 44385 / JCM 11950 / CIP 105744 / CCUG 35717)).